The following is a 970-amino-acid chain: MAVEKSNTTVGGVEILKPRTDNREYRMIVLKNLLQVLLISDPDTDKCAASMSVSVGSFSDPQGLEGLAHFLEHMLFYASEKYPEEDSYSKYITEHGGSTNAYTASEETNYHFDVNADCFDEALDRFAQFFIKPLMSADATMREIKAVDSENQKNLLSDGWRIRQLQKHLSKEDHPYHKFSTGNMDTLHVRPQAKGVDTRSELIKFYEEHYSANIMHLVVYGKESLDKIQDLVERMFQEIQNTNKVVPRFPGQPCTADHLQILVKAIPIKQGHKLGVSWPVTPSIHHYDEAPSQYLGHLIGHEGEGSLFHALKTLGWATGLSAGEGEWTLDYSFFKVSIDLTDAGHEHMQEILGLLFNYIQLLQQTGVCQWIFDELSAICETKFHYQDKIPPMSYIVDIASNMQIYPTKDWLVGSSLPTKFNPAIVQKVVDELSPSNFRIFWESQKFEGQTDKAEPWYNTAYSLEKITSSTIQEWVQSAPDVHLHLPAPNVFIPTDLSLKDADDKETVPVLLRKTPFSRLWYKPDTMFSKPKAYVKMDFNCPLAVSSPDAAVLTDIFTRLLMDYLNEYAYYAQVAGLYYGVSLSDNGFELTLLGYNHKLRILLETVVGKIANFEVKPDRFAVIKETVTKEYQNYKFRQPYHQAMYYCSLILQDQTWPWTEELDVLSHLEAEDVAKFVPMLLSRTFIECYIAGNVENNEAESMVKHIEDVLFNDPKPICRPLFPSQHLTNRVVKLGEGMKYFYHQDGSNPSDENSALVHYIQVHRDDFSMNIKLQLFGLVAKQATFHQLRTVEQLGYITALAQRNDSGIYGVQFIIQSSVKGPGHIDSRVESLLKNFESKLYEMSNEDFKSNVTALIDMKLEKHKNLKEESRFYWREIQSGTLKFNRKEAEVSALKQLQKQELIDFFDEYIKVGAARKKSLSIRVYGSQHLKEMASDKDEVPSPSVEIEDIVGFRKSQPLHGSFRGCGQPKL.

His-69 is a Zn(2+) binding site. The active-site Proton acceptor is the Glu-72. His-73 contributes to the Zn(2+) binding site. Glu-143 is an active-site residue. Glu-150 lines the Zn(2+) pocket.

This sequence belongs to the peptidase M16 family. It depends on Zn(2+) as a cofactor.

It localises to the peroxisome. Peptidase that might be involved in pathogen or wound response. Not required for peroxisome biogenesis, indole-3-butyric acid (IBA) metabolism, fatty acid beta-oxidation or degradation of glyoxylate cycle enzymes during seedling development. This is Insulin-degrading enzyme-like 1, peroxisomal (PXM16) from Arabidopsis thaliana (Mouse-ear cress).